The primary structure comprises 149 residues: 5-hydroxytryptamine receptor 1E (149 aa).

The Extracellular segment spans residues 1–6; sequence HQPANY. A helical membrane pass occupies residues 7–31; sequence LICSLAVTDLLVAVLVMPLSIMYIV. Topologically, residues 32-39 are cytoplasmic; the sequence is MDSWRLGY. A helical membrane pass occupies residues 40-65; sequence FICEVWLSVDMTCCTCSILHLCVIAL. The cysteines at positions 42 and 120 are disulfide-linked. Serotonin contacts are provided by D49 and C53. Residues 66 to 68 carry the DRY motif; important for ligand-induced conformation changes motif; it reads DRY. The Extracellular segment spans residues 66 to 85; it reads DRYWAITNAIEYARKRTAKR. Residues 86–104 traverse the membrane as a helical segment; it reads AGLMILTVWTISIFISMPP. At 105-149 the chain is on the cytoplasmic side; the sequence is LFWRSHRQLSPPPSQCAIQHDHVIYTIYSTLGAFYIPLTLILILY.

The protein belongs to the G-protein coupled receptor 1 family.

The protein resides in the cell membrane. Functionally, G-protein coupled receptor for 5-hydroxytryptamine (serotonin). Also functions as a receptor for various alkaloids and psychoactive substances. Ligand binding causes a conformation change that triggers signaling via guanine nucleotide-binding proteins (G proteins) and modulates the activity of downstream effectors, such as adenylate cyclase. HTR1E is coupled to G(i)/G(o) G alpha proteins and mediates inhibitory neurotransmission by inhibiting adenylate cyclase activity. The polypeptide is 5-hydroxytryptamine receptor 1E (HTR1E) (Sus scrofa (Pig)).